The chain runs to 448 residues: UDP-N-acetylmuramoylalanine--D-glutamate ligase (448 aa).

116-122 (GSNAKST) provides a ligand contact to ATP.

The protein belongs to the MurCDEF family.

The protein localises to the cytoplasm. The enzyme catalyses UDP-N-acetyl-alpha-D-muramoyl-L-alanine + D-glutamate + ATP = UDP-N-acetyl-alpha-D-muramoyl-L-alanyl-D-glutamate + ADP + phosphate + H(+). The protein operates within cell wall biogenesis; peptidoglycan biosynthesis. Its function is as follows. Cell wall formation. Catalyzes the addition of glutamate to the nucleotide precursor UDP-N-acetylmuramoyl-L-alanine (UMA). This chain is UDP-N-acetylmuramoylalanine--D-glutamate ligase, found in Pseudomonas syringae pv. syringae (strain B728a).